The sequence spans 207 residues: High frequency lysogenization protein HflD homolog (207 aa).

The protein belongs to the HflD family.

The protein localises to the cytoplasm. The protein resides in the cell inner membrane. The polypeptide is High frequency lysogenization protein HflD homolog (Pseudomonas fluorescens (strain SBW25)).